The primary structure comprises 590 residues: Phosphatidylserine decarboxylase proenzyme 1, mitochondrial (590 aa).

The N-terminal 59 residues, 1-59 (MPLKPISFRWSKTSVRSVPNPFMYGPDNLNKPLSRASQMAERVHQQTPSSTNYQQRRYF), are a transit peptide targeting the mitochondrion. Residues 60–140 (SYYYYQFPKI…GKERRRFIRW (81 aa)) lie on the Mitochondrial matrix side of the membrane. Residues 141-159 (WTVTSLTIVLGGVYAKIKY) form a helical membrane-spanning segment. Residues 160–590 (ERGDHEENPY…KVGQSLGGFV (431 aa)) lie on the Mitochondrial intermembrane side of the membrane. Residues Asp260, His403, and Ser558 each act as charge relay system; for autoendoproteolytic cleavage activity in the active site. The active-site Schiff-base intermediate with substrate; via pyruvic acid; for decarboxylase activity is Ser558. Ser558 is modified (pyruvic acid (Ser); by autocatalysis).

It belongs to the phosphatidylserine decarboxylase family. PSD-B subfamily. Eukaryotic type I sub-subfamily. In terms of assembly, heterodimer of a large membrane-associated beta subunit and a small pyruvoyl-containing alpha subunit. Pyruvate serves as cofactor. Is synthesized initially as an inactive proenzyme. Formation of the active enzyme involves a self-maturation process in which the active site pyruvoyl group is generated from an internal serine residue via an autocatalytic post-translational modification. Two non-identical subunits are generated from the proenzyme in this reaction, and the pyruvate is formed at the N-terminus of the alpha chain, which is derived from the carboxyl end of the proenzyme. The autoendoproteolytic cleavage occurs by a canonical serine protease mechanism, in which the side chain hydroxyl group of the serine supplies its oxygen atom to form the C-terminus of the beta chain, while the remainder of the serine residue undergoes an oxidative deamination to produce ammonia and the pyruvoyl prosthetic group on the alpha chain. During this reaction, the Ser that is part of the protease active site of the proenzyme becomes the pyruvoyl prosthetic group, which constitutes an essential element of the active site of the mature decarboxylase.

The protein localises to the mitochondrion inner membrane. The enzyme catalyses a 1,2-diacyl-sn-glycero-3-phospho-L-serine + H(+) = a 1,2-diacyl-sn-glycero-3-phosphoethanolamine + CO2. It functions in the pathway phospholipid metabolism; phosphatidylethanolamine biosynthesis; phosphatidylethanolamine from CDP-diacylglycerol: step 2/2. Catalyzes the formation of phosphatidylethanolamine (PtdEtn) from phosphatidylserine (PtdSer). Plays a central role in phospholipid metabolism and in the interorganelle trafficking of phosphatidylserine. Important for virulence. The polypeptide is Phosphatidylserine decarboxylase proenzyme 1, mitochondrial (Candida albicans (strain SC5314 / ATCC MYA-2876) (Yeast)).